Consider the following 539-residue polypeptide: Zinc finger and BTB domain-containing protein 7B (539 aa).

One can recognise a BTB domain in the interval 34 to 115 (CDLTIRTQGL…AYTATLTTSS (82 aa)). Ser-150 bears the Phosphoserine mark. The interval 171–308 (ASGVPNGEDS…SPEELGSDED (138 aa)) is disordered. A compositionally biased stretch (pro residues) spans 182-196 (PQVPLPPPPPPPPRP). Positions 197–206 (VARRSRKPRK) are enriched in basic residues. N6-acetyllysine; by EP300; alternate occurs at positions 206 and 212. Residues Lys-206 and Lys-212 each participate in a glycyl lysine isopeptide (Lys-Gly) (interchain with G-Cter in ubiquitin); alternate cross-link. Acidic residues predominate over residues 273–282 (YEGEEEEEEL). Lys-335 bears the N6-acetyllysine; by EP300; alternate mark. A Glycyl lysine isopeptide (Lys-Gly) (interchain with G-Cter in ubiquitin); alternate cross-link involves residue Lys-335. Residues 344 to 400 (MPQECPVCHKIIHGAGKLPRHMRTHTGEKPFACEVCGVRFTRNDKLKIHMRKHTGER) form a required for interaction with and acetylation by EP300 region. The segment at 346 to 368 (QECPVCHKIIHGAGKLPRHMRTH) adopts a C2H2-type 1 zinc-finger fold. Position 369 is a phosphothreonine (Thr-369). 2 C2H2-type zinc fingers span residues 374–396 (FACE…MRKH) and 402–424 (YSCP…MHLH). A C2H2-type 4; atypical zinc finger spans residues 430-454 (YECHLCHKAFAKEDHLQRHLKGQNC). Disordered regions lie at residues 458–486 (RTRR…GLDL) and 501–539 (FWEQ…MESS). The segment covering 508-517 (TGPPVSTPGP) has biased composition (pro residues).

In terms of assembly, homodimerizes. Interacts with NCL, NEDD4 and YBX1. Interacts with HNRNPU (via RNA-binding RGG-box region); the interaction facilitates the recruitment of long non-coding RNA Blnc1 by ZBTB7B. Interacts with HDAC4 and HDAC5; the interaction allows the recruitment of HDAC4 and HDAC5 on CD8 loci for deacetylation and possible inhibition of CD8 genes expression. Acetylated directly and specifically by EP300. EP300-mediated acetylation of Lys-206, Lys-212 and Lys-335 stabilizes the protein by antagonizing ubiquitin conjugation. Post-translationally, ubiquitinated, leading to proteasomal degradation. Competes with acetylation on Lys-206, Lys-212 and Lys-335.

The protein localises to the nucleus. Transcription regulator that acts as a key regulator of lineage commitment of immature T-cell precursors. Exerts distinct biological functions in the mammary epithelial cells and T cells in a tissue-specific manner. Necessary and sufficient for commitment of CD4 lineage, while its absence causes CD8 commitment. Development of immature T-cell precursors (thymocytes) to either the CD4 helper or CD8 killer T-cell lineages correlates precisely with their T-cell receptor specificity for major histocompatibility complex class II or class I molecules, respectively. Cross-antagonism between ZBTB7B and CBF complexes are determinative to CD4 versus CD8 cell fate decision. Suppresses RUNX3 expression and imposes CD4+ lineage fate by inducing the SOCS suppressors of cytokine signaling. induces, as a transcriptional activator, SOCS genes expression which represses RUNX3 expression and promotes the CD4+ lineage fate. During CD4 lineage commitment, associates with multiple sites at the CD8 locus, acting as a negative regulator of the CD8 promoter and enhancers by epigenetic silencing through the recruitment of class II histone deacetylases, such as HDAC4 and HDAC5, to these loci. Regulates the development of IL17-producing CD1d-restricted naural killer (NK) T cells. Also functions as an important metabolic regulator in the lactating mammary glands. Critical feed-forward regulator of insulin signaling in mammary gland lactation, directly regulates expression of insulin receptor substrate-1 (IRS-1) and insulin-induced Akt-mTOR-SREBP signaling. Transcriptional repressor of the collagen COL1A1 and COL1A2 genes. May also function as a repressor of fibronectin and possibly other extracellular matrix genes. Potent driver of brown fat development, thermogenesis and cold-induced beige fat formation. Recruits the brown fat lncRNA 1 (Blnc1):HNRNPU ribonucleoprotein complex to activate thermogenic gene expression in brown and beige adipocytes. The polypeptide is Zinc finger and BTB domain-containing protein 7B (Homo sapiens (Human)).